Consider the following 185-residue polypeptide: Protein GrpE (185 aa).

Positions methionine 1–asparagine 12 are enriched in basic and acidic residues. Residues methionine 1 to alanine 22 are disordered.

The protein belongs to the GrpE family. As to quaternary structure, homodimer.

It is found in the cytoplasm. In terms of biological role, participates actively in the response to hyperosmotic and heat shock by preventing the aggregation of stress-denatured proteins, in association with DnaK and GrpE. It is the nucleotide exchange factor for DnaK and may function as a thermosensor. Unfolded proteins bind initially to DnaJ; upon interaction with the DnaJ-bound protein, DnaK hydrolyzes its bound ATP, resulting in the formation of a stable complex. GrpE releases ADP from DnaK; ATP binding to DnaK triggers the release of the substrate protein, thus completing the reaction cycle. Several rounds of ATP-dependent interactions between DnaJ, DnaK and GrpE are required for fully efficient folding. This is Protein GrpE from Pseudomonas putida (strain ATCC 700007 / DSM 6899 / JCM 31910 / BCRC 17059 / LMG 24140 / F1).